We begin with the raw amino-acid sequence, 326 residues long: Ribosomal RNA small subunit methyltransferase H (326 aa).

S-adenosyl-L-methionine contacts are provided by residues 35–37, Asp53, Phe80, Asp101, and Gln108; that span reads GGY. The interval 260 to 306 is disordered; the sequence is EGVSRHLPQASNAGAGNPPPSFQAVSRRAVKPLDAETRVNPRSRSAR.

Belongs to the methyltransferase superfamily. RsmH family.

It localises to the cytoplasm. The catalysed reaction is cytidine(1402) in 16S rRNA + S-adenosyl-L-methionine = N(4)-methylcytidine(1402) in 16S rRNA + S-adenosyl-L-homocysteine + H(+). Its function is as follows. Specifically methylates the N4 position of cytidine in position 1402 (C1402) of 16S rRNA. In Rhodospirillum rubrum (strain ATCC 11170 / ATH 1.1.1 / DSM 467 / LMG 4362 / NCIMB 8255 / S1), this protein is Ribosomal RNA small subunit methyltransferase H.